A 382-amino-acid chain; its full sequence is D-galactonate dehydratase (382 aa).

Asp183 is a Mg(2+) binding site. His185 functions as the Proton donor in the catalytic mechanism. Residues Glu209 and Glu235 each coordinate Mg(2+). His285 acts as the Proton acceptor in catalysis.

It belongs to the mandelate racemase/muconate lactonizing enzyme family. GalD subfamily. The cofactor is Mg(2+).

It carries out the reaction D-galactonate = 2-dehydro-3-deoxy-D-galactonate + H2O. The protein operates within carbohydrate acid metabolism; D-galactonate degradation; D-glyceraldehyde 3-phosphate and pyruvate from D-galactonate: step 1/3. Catalyzes the dehydration of D-galactonate to 2-keto-3-deoxy-D-galactonate. This Salmonella gallinarum (strain 287/91 / NCTC 13346) protein is D-galactonate dehydratase.